The following is a 238-amino-acid chain: NAD(P)H-hydrate epimerase (238 aa).

Residues 11–217 enclose the YjeF N-terminal domain; the sequence is AAALDKDLMS…EIHQKYNLQL (207 aa). 61 to 65 is a (6S)-NADPHX binding site; that stretch reads NNGGD. Asn62 and Asp123 together coordinate K(+). Residues 127–133 and Asp156 contribute to the (6S)-NADPHX site; that span reads GFSFTGS. Ser159 contributes to the K(+) binding site.

This sequence belongs to the NnrE/AIBP family. It depends on K(+) as a cofactor.

The protein localises to the cytoplasm. The protein resides in the mitochondrion. The catalysed reaction is (6R)-NADHX = (6S)-NADHX. It catalyses the reaction (6R)-NADPHX = (6S)-NADPHX. Functionally, catalyzes the epimerization of the S- and R-forms of NAD(P)HX, a damaged form of NAD(P)H that is a result of enzymatic or heat-dependent hydration. This is a prerequisite for the S-specific NAD(P)H-hydrate dehydratase to allow the repair of both epimers of NAD(P)HX. The protein is NAD(P)H-hydrate epimerase of Sclerotinia sclerotiorum (strain ATCC 18683 / 1980 / Ss-1) (White mold).